The primary structure comprises 124 residues: MARIAGVDIPKNKRGVIALTYIFGLGKSRAIEILEKAQVSQDKKVQDWNDDEIGAIRDAVSFYKIEGELRSEVSLNIKRLMDIGCYRGIRHRSGLPLRGQRTKNNSRTRKGKRKTVANKKKATK.

The segment at 94 to 124 is disordered; sequence GLPLRGQRTKNNSRTRKGKRKTVANKKKATK. Over residues 100 to 124 the composition is skewed to basic residues; the sequence is QRTKNNSRTRKGKRKTVANKKKATK.

It belongs to the universal ribosomal protein uS13 family. Part of the 30S ribosomal subunit. Forms a loose heterodimer with protein S19. Forms two bridges to the 50S subunit in the 70S ribosome.

Located at the top of the head of the 30S subunit, it contacts several helices of the 16S rRNA. In the 70S ribosome it contacts the 23S rRNA (bridge B1a) and protein L5 of the 50S subunit (bridge B1b), connecting the 2 subunits; these bridges are implicated in subunit movement. Contacts the tRNAs in the A and P-sites. The protein is Small ribosomal subunit protein uS13 of Flavobacterium johnsoniae (strain ATCC 17061 / DSM 2064 / JCM 8514 / BCRC 14874 / CCUG 350202 / NBRC 14942 / NCIMB 11054 / UW101) (Cytophaga johnsonae).